Consider the following 36-residue polypeptide: MGNLDLEIIAQLTVVTLTLLAGPVIVFLLSVRKGNL.

A helical membrane pass occupies residues 8–28 (IIAQLTVVTLTLLAGPVIVFL).

This sequence belongs to the Psb30/Ycf12 family. In terms of assembly, PSII is composed of 1 copy each of membrane proteins PsbA, PsbB, PsbC, PsbD, PsbE, PsbF, PsbH, PsbI, PsbJ, PsbK, PsbL, PsbM, PsbT, PsbX, PsbY, PsbZ, Psb30/Ycf12, peripheral proteins of the oxygen-evolving complex and a large number of cofactors. It forms dimeric complexes.

The protein resides in the plastid. Its subcellular location is the cyanelle thylakoid membrane. Its function is as follows. A core subunit of photosystem II (PSII), probably helps stabilize the reaction center. The sequence is that of Photosystem II reaction center protein Psb30 from Cyanophora paradoxa.